We begin with the raw amino-acid sequence, 314 residues long: ATP synthase gamma chain (314 aa).

This sequence belongs to the ATPase gamma chain family. In terms of assembly, F-type ATPases have 2 components, CF(1) - the catalytic core - and CF(0) - the membrane proton channel. CF(1) has five subunits: alpha(3), beta(3), gamma(1), delta(1), epsilon(1). CF(0) has three main subunits: a, b and c.

It is found in the cellular thylakoid membrane. Functionally, produces ATP from ADP in the presence of a proton gradient across the membrane. The gamma chain is believed to be important in regulating ATPase activity and the flow of protons through the CF(0) complex. This is ATP synthase gamma chain from Synechocystis sp. (strain ATCC 27184 / PCC 6803 / Kazusa).